A 275-amino-acid chain; its full sequence is Protein FAM210A (275 aa).

Residues 68-108 (SSQPADTPRKVPEEREPLTSATEVPKQSPVESDASDPDPLQ) are disordered. Residues 74 to 84 (TPRKVPEEREP) are compositionally biased toward basic and acidic residues. Positions 109–221 (DKSISLVQRF…GYMSTPPPVK (113 aa)) constitute a DUF1279 domain. The chain crosses the membrane as a helical span at residues 128–148 (VMIPVHLVTSTVWFGSFYYAA). Positions 221–271 (KEYLQDRMEETKDKITEKMEETKDKITEKMEETKDKITEKIQETKDKVSFK) form a coiled coil.

It belongs to the FAM210 family. Interacts with ATAD3A.

The protein localises to the membrane. It is found in the mitochondrion. It localises to the cytoplasm. May play a role in the structure and strength of both muscle and bone. This is Protein FAM210A (FAM210A) from Gallus gallus (Chicken).